The primary structure comprises 410 residues: MAKDAGLIEANGELKVFIDQNLSPGKGVVSLVAVHPSTVNPLGKQLLPKTFGQSNVNIAQQVVIGTPQRPAASNTLVVGSPHTPSTHFASQNQPSDSSPWSAGKRNRKGEKNGKGLRHFSMKVCEKVQRKGTTSYNEVADELVAEFSAADNHILPNESAYDQKNIRRRVYDALNVLMAMNIISKEKKEIKWIGLPTNSAQECQNLEVERQRRLERIKQKQSQLQELILQQIAFKNLVQRNRHAEQQASRPPPPNSVIHLPFIIVNTSKKTVIDCSISNDKFEYLFNFDNTFEIHDDIEVLKRMGMACGLESGSCSAEDLKMARSLVPKALEPYVTEMAQGTVGGVFITTAGSTSNGTRFSASDLTNGADGMLATSSNGSQYSGSRVETPVSYVGEDDEEDDDFNENDEDD.

Lys3 bears the N6-acetyllysine mark. Ser23 carries the post-translational modification Phosphoserine. Over residues 73-100 (SNTLVVGSPHTPSTHFASQNQPSDSSPW) the composition is skewed to polar residues. The tract at residues 73–116 (SNTLVVGSPHTPSTHFASQNQPSDSSPWSAGKRNRKGEKNGKGL) is disordered. The span at 104 to 116 (KRNRKGEKNGKGL) shows a compositional bias: basic residues. The tract at residues 105–127 (RNRKGEKNGKGLRHFSMKVCEKV) is interaction with CEBPA. Residues 113 to 195 (GKGLRHFSMK…KKEIKWIGLP (83 aa)) mediate DNA binding. The DEF box motif lies at 161-195 (DQKNIRRRVYDALNVLMAMNIISKEKKEIKWIGLP). The dimerization stretch occupies residues 204 to 277 (NLEVERQRRL…KKTVIDCSIS (74 aa)). Positions 211-327 (RRLERIKQKQ…DLKMARSLVP (117 aa)) are enhances binding of RB protein to E2F. The segment at 214–246 (ERIKQKQSQLQELILQQIAFKNLVQRNRHAEQQ) is DCB1. The DCB2 stretch occupies residues 259–315 (LPFIIVNTSKKTVIDCSISNDKFEYLFNFDNTFEIHDDIEVLKRMGMACGLESGSCS). The interval 370-410 (GMLATSSNGSQYSGSRVETPVSYVGEDDEEDDDFNENDEDD) is disordered. Residues 373–385 (ATSSNGSQYSGSR) show a composition bias toward polar residues. A compositionally biased stretch (acidic residues) spans 394–410 (GEDDEEDDDFNENDEDD).

The protein belongs to the E2F/DP family. In terms of assembly, component of the E2F:DP transcription factor complex. Forms heterodimers with E2F family members. The complex can interact with hypophosphorylated retinoblastoma protein RB1 and related proteins (RBL1 and RBL2) that inhibit the E2F transactivation domain. This repression involves recruitment of histone deacetylase (HDAC). During the cell cycle, from mid-to-late G1 phase, RB family members become phosphorylated, detach from the DRTF1/E2F complex to render E2F transcriptionally active. Viral oncoproteins, notably E1A, T-antigen and HPV E7, are capable of sequestering RB protein, thus releasing the active complex. Part of the E2F6.com-1 complex in G0 phase is composed of E2F6, MGA, MAX, TFDP1, CBX3, BAT8, EUHMTASE1, RING1, RNF2, MBLR, L3MBTL2 YAF2. Component of the DREAM complex (also named LINC complex) at least composed of E2F4, E2F5, LIN9, LIN37, LIN52, LIN54, MYBL1, MYBL2, RBL1, RBL2, RBBP4, TFDP1 and TFDP2. The complex exists in quiescent cells where it represses cell cycle-dependent genes. It dissociates in S phase when LIN9, LIN37, LIN52 and LIN54 form a subcomplex that binds to MYBL2. The complex TFDP1:E2F1 interacts with CEBPA; the interaction prevents CEBPA binding to target gene promoters and represses its transcriptional activity. Post-translationally, phosphorylation by E2F1-bound cyclin A-CDK2, in the S phase, inhibits E2F-mediated DNA binding and transactivation. In terms of processing, ubiquitinated by the BCR(KBTBD5) complex, leading to its subsequent degradation. In terms of tissue distribution, highest levels in muscle. Also expressed in brain, placenta, liver and kidney. Lower levels in lung and pancreas. Not detected in heart.

The protein resides in the nucleus. The protein localises to the cytoplasm. Its function is as follows. Can stimulate E2F-dependent transcription. Binds DNA cooperatively with E2F family members through the E2 recognition site, 5'-TTTC[CG]CGC-3', found in the promoter region of a number of genes whose products are involved in cell cycle regulation or in DNA replication. The E2F1:DP complex appears to mediate both cell proliferation and apoptosis. Blocks adipocyte differentiation by repressing CEBPA binding to its target gene promoters. The protein is Transcription factor Dp-1 (TFDP1) of Homo sapiens (Human).